The chain runs to 122 residues: Large ribosomal subunit protein uL14 (122 aa).

This sequence belongs to the universal ribosomal protein uL14 family. In terms of assembly, part of the 50S ribosomal subunit. Forms a cluster with proteins L3 and L19. In the 70S ribosome, L14 and L19 interact and together make contacts with the 16S rRNA in bridges B5 and B8.

In terms of biological role, binds to 23S rRNA. Forms part of two intersubunit bridges in the 70S ribosome. This chain is Large ribosomal subunit protein uL14, found in Lactococcus lactis subsp. lactis (strain IL1403) (Streptococcus lactis).